A 299-amino-acid chain; its full sequence is Non-structural protein V (299 aa).

The segment at 40–91 (SDNPGQERATYKEEKAGGSGLSKPCLSAIGSTEGGAPRIRGQGSGESDDDTE) is disordered. The interaction with host STAT1 stretch occupies residues 110-120 (HYVYDHSGEAV). Positions 133–163 (SGLDGDSTLSEGDNESENSDVDIGEPDTEGY) are disordered. Acidic residues predominate over residues 144–160 (GDNESENSDVDIGEPDT). His-232, Cys-251, Cys-255, Cys-267, Cys-269, Cys-272, Cys-276, and Cys-279 together coordinate Zn(2+).

Belongs to the paramyxoviruses V protein family. Interacts with host IFIH1/MDA5 and DHX58/LGP2; these interactions are involved in the inhibition of the host type I interferon signaling pathway. Interacts with host TYK2; this interaction inhibits the type I interferon signaling pathway without affecting the type II pathway. Interacts with host IRF7; this interaction inhibits IRF7 translocation to the nucleus. Interacts with host CHUK. Interacts with host RELA/p65; this interaction inhibits the nuclear translocation of NF-KappaB. Interacts (via N-terminus) with host STAT1 and JAK1; these interactions inhibit STAT1 phosphorylation by Jak1 and thereby the type I interferon signaling pathway. Interacts (via C-terminus) with host STAT2; this interaction is involved in the inhibition of the host type I interferon signaling pathway. Forms a complex with host PPP1CA and PPP1CC; this interaction prevents dephosphorylation of host IFIH1/MDA5 and leads to the inhibition of the host type I interferon signaling pathway. Interacts with host IRF9; this interaction prevents the binding of IRF9 to STAT2 and thereby the type I interferon signaling pathway. Interacts with host RIGI regulatory protein (via CARDs domain) and host TRIM25 (via SPRY domain); these interactions prevent TRIM25-mediated ubiquitination of RIG-I and disrupts downstream RIG-I signaling.

Its subcellular location is the host cytoplasm. Its function is as follows. Plays an essential role in the inhibition of host immune response. Prevents the establishment of cellular antiviral state by blocking interferon-alpha/beta (IFN-alpha/beta) production and signaling pathway. Interacts with host IFIH1/MDA5 and DHX58/LGP2 to inhibit the transduction pathway involved in the activation of IFN-beta promoter, thus protecting the virus against cell antiviral state. Blocks the type I interferon signaling pathway by interacting with host TYK2 and thereby inhibiting downstream STAT1 and STAT2 phosphorylation. Blocks the type I interferon signaling pathway by disrupting the RIG-I signaling pathway. Moderately affects the type II interferon signaling. Prevents PP1alpha/gamma-mediated dephosphorylation of host IFIH1/MDA5 and thus blocks its activation. The protein is Non-structural protein V (P/V) of Homo sapiens (Human).